The primary structure comprises 383 residues: Sulfate adenylyltransferase (383 aa).

This sequence belongs to the sulfate adenylyltransferase family.

The catalysed reaction is sulfate + ATP + H(+) = adenosine 5'-phosphosulfate + diphosphate. It functions in the pathway sulfur metabolism; hydrogen sulfide biosynthesis; sulfite from sulfate: step 1/3. This is Sulfate adenylyltransferase from Halothermothrix orenii (strain H 168 / OCM 544 / DSM 9562).